Reading from the N-terminus, the 545-residue chain is Chaperonin GroEL (545 aa).

Residues T29–P32, K50, D86–T90, G415, and D495 each bind ATP.

It belongs to the chaperonin (HSP60) family. Forms a cylinder of 14 subunits composed of two heptameric rings stacked back-to-back. Interacts with the co-chaperonin GroES.

Its subcellular location is the cytoplasm. It carries out the reaction ATP + H2O + a folded polypeptide = ADP + phosphate + an unfolded polypeptide.. Functionally, together with its co-chaperonin GroES, plays an essential role in assisting protein folding. The GroEL-GroES system forms a nano-cage that allows encapsulation of the non-native substrate proteins and provides a physical environment optimized to promote and accelerate protein folding. This chain is Chaperonin GroEL, found in Bacteroides fragilis (strain ATCC 25285 / DSM 2151 / CCUG 4856 / JCM 11019 / LMG 10263 / NCTC 9343 / Onslow / VPI 2553 / EN-2).